The chain runs to 380 residues: 1-deoxy-D-xylulose 5-phosphate reductoisomerase 2 (380 aa).

Positions 10, 11, 12, 13, 36, 37, 38, and 120 each coordinate NADPH. 1-deoxy-D-xylulose 5-phosphate is bound at residue Lys121. Glu122 contributes to the NADPH binding site. Position 146 (Asp146) interacts with Mn(2+). 4 residues coordinate 1-deoxy-D-xylulose 5-phosphate: Ser147, Glu148, Ser172, and His195. Glu148 provides a ligand contact to Mn(2+). Gly201 is a binding site for NADPH. Residues Ser208, Asn213, Lys214, and Glu217 each contribute to the 1-deoxy-D-xylulose 5-phosphate site. Glu217 contacts Mn(2+).

It belongs to the DXR family. Mg(2+) is required as a cofactor. Requires Mn(2+) as cofactor.

The enzyme catalyses 2-C-methyl-D-erythritol 4-phosphate + NADP(+) = 1-deoxy-D-xylulose 5-phosphate + NADPH + H(+). It functions in the pathway isoprenoid biosynthesis; isopentenyl diphosphate biosynthesis via DXP pathway; isopentenyl diphosphate from 1-deoxy-D-xylulose 5-phosphate: step 1/6. In terms of biological role, catalyzes the NADPH-dependent rearrangement and reduction of 1-deoxy-D-xylulose-5-phosphate (DXP) to 2-C-methyl-D-erythritol 4-phosphate (MEP). This is 1-deoxy-D-xylulose 5-phosphate reductoisomerase 2 from Bacillus thuringiensis subsp. konkukian (strain 97-27).